A 327-amino-acid polypeptide reads, in one-letter code: Diacylglycerol acyltransferase/mycolyltransferase Ag85B (327 aa).

A signal peptide spans Met1–Ala38. Residue Leu80–Arg81 coordinates substrate. A fibronectin-binding region spans residues Phe96–Val106. Residues Cys125 and Cys130 are joined by a disulfide bond. Positions 164 and 192 each coordinate substrate. Catalysis depends on Ser164, which acts as the Nucleophile. The active site involves Glu268. Substrate is bound by residues Phe270–Gly273, Lys277, and His300–Trp302. His300 is an active-site residue.

It belongs to the mycobacterial A85 antigen family.

The protein localises to the secreted. The enzyme catalyses 2 alpha,alpha'-trehalose 6-mycolate = alpha,alpha'-trehalose 6,6'-bismycolate + alpha,alpha-trehalose. It catalyses the reaction an acyl-CoA + a 1,2-diacyl-sn-glycerol = a triacyl-sn-glycerol + CoA. The antigen 85 proteins (FbpA, FbpB, FbpC) are responsible for the high affinity of mycobacteria for fibronectin, a large adhesive glycoprotein, which facilitates the attachment of M.tuberculosis to murine alveolar macrophages (AMs). They also help to maintain the integrity of the cell wall by catalyzing the transfer of mycolic acids to cell wall arabinogalactan and through the synthesis of alpha,alpha-trehalose dimycolate (TDM, cord factor). They catalyze the transfer of a mycoloyl residue from one molecule of alpha,alpha-trehalose monomycolate (TMM) to another TMM, leading to the formation of TDM. This is Diacylglycerol acyltransferase/mycolyltransferase Ag85B (fbpB) from Mycobacterium leprae (strain TN).